A 1408-amino-acid polypeptide reads, in one-letter code: Protein patched homolog 1 (1408 aa).

Positions 1 to 20 (MLTLLEPPGAKRSPTVGNYN) are disordered. The Cytoplasmic segment spans residues 1–136 (MLTLLEPPGA…GNTVHRNAWS (136 aa)). A helical membrane pass occupies residues 137-157 (IILAVSMIFAVCCYGLQYVHI). Over 158-649 (ETDIVKLWVA…STSIADMLEE (492 aa)) the chain is Extracellular. Residues 455-479 (STAPIPTTTTLSPEEARAAEEKEKK) form a disordered region. Over residues 468–479 (EEARAAEEKEKK) the composition is skewed to basic and acidic residues. Asn599 carries an N-linked (GlcNAc...) asparagine glycan. A helical transmembrane segment spans residues 650-670 (FCQFNYTIILAGYALMLAYAI). An SSD domain is found at 654 to 816 (NYTIILAGYA…LTIYPAIISI (163 aa)). Residues 671-686 (VTQARFDNCLPATESS) are Cytoplasmic-facing. The helical transmembrane segment at 687–707 (MGLALAGVLVVTFASVAGLGL) threads the bilayer. Over 708 to 709 (AT) the chain is Extracellular. The chain crosses the membrane as a helical span at residues 710–730 (WFGIEFNAATTQIVPFLTLGI). Over 731–765 (GVDNMFMLLHNYRDVVKLAGGHAEMAILMRETGMS) the chain is Cytoplasmic. A helical membrane pass occupies residues 766 to 786 (ILCTSINNILSFLTGTLLPIP). At 787-795 (ALRSFCAQS) the chain is on the extracellular side. A helical transmembrane segment spans residues 796–816 (SILLTFNFIAILTIYPAIISI). Over 817-901 (DLRRKKAQRR…YYYIPFISKP (85 aa)) the chain is Cytoplasmic. Residues 902–922 (ASKVAIIVGCCALLGASFIGM) traverse the membrane as a helical segment. Topologically, residues 923-1175 (RQSTLGLELG…QGIAFTFWEQ (253 aa)) are extracellular. Asn1026 and Asn1036 each carry an N-linked (GlcNAc...) asparagine glycan. The helical transmembrane segment at 1176–1196 (YLFLTGNLMQAISIITISVFC) threads the bilayer. Over 1197–1217 (VISVLLFNPWAALMVVCILGI) the chain is Cytoplasmic. 2 consecutive transmembrane segments (helical) span residues 1218–1238 (MTCELAGFMGLVGIKLNPVSA) and 1239–1259 (VTLITAVGIGVEFTVHVVVSF). Residues 1260–1276 (LTALGTRSQRTSSAVDR) are Extracellular-facing. A helical membrane pass occupies residues 1277-1297 (VFVPVIHGSFSTLLGILMLGF). Over 1298-1305 (SEFEFVVK) the chain is Cytoplasmic. Residues 1306 to 1326 (YFFIVMTALICIGIINGLILL) traverse the membrane as a helical segment. Residues 1327–1408 (PVLLSWFGPR…GNNTRRLPAV (82 aa)) lie on the Extracellular side of the membrane. The interval 1342 to 1408 (TGGKTTLTLP…GNNTRRLPAV (67 aa)) is disordered. Positions 1387–1408 (TTRTSGGNRGTVGNNTRRLPAV) are enriched in low complexity.

It belongs to the patched family. As to expression, germ line and its progenitors.

Its subcellular location is the membrane. Functionally, required but not essential for cytokinesis of mitotically proliferating germ cells. In Caenorhabditis elegans, this protein is Protein patched homolog 1 (ptc-1).